Consider the following 216-residue polypeptide: LexA repressor (216 aa).

The H-T-H motif DNA-binding region spans 28-48 (RAEIAAELGFSSANSAEEHLR). Residues serine 134 and lysine 171 each act as for autocatalytic cleavage activity in the active site.

This sequence belongs to the peptidase S24 family. In terms of assembly, homodimer.

It catalyses the reaction Hydrolysis of Ala-|-Gly bond in repressor LexA.. Represses a number of genes involved in the response to DNA damage (SOS response), including recA and lexA. In the presence of single-stranded DNA, RecA interacts with LexA causing an autocatalytic cleavage which disrupts the DNA-binding part of LexA, leading to derepression of the SOS regulon and eventually DNA repair. This chain is LexA repressor, found in Paraburkholderia xenovorans (strain LB400).